A 147-amino-acid polypeptide reads, in one-letter code: Deoxyuridine 5'-triphosphate nucleotidohydrolase (147 aa).

Substrate contacts are provided by residues 67 to 69, N80, and 84 to 86; these read RSG and TID.

Belongs to the dUTPase family. Requires Mg(2+) as cofactor.

It catalyses the reaction dUTP + H2O = dUMP + diphosphate + H(+). It participates in pyrimidine metabolism; dUMP biosynthesis; dUMP from dCTP (dUTP route): step 2/2. This enzyme is involved in nucleotide metabolism: it produces dUMP, the immediate precursor of thymidine nucleotides and it decreases the intracellular concentration of dUTP so that uracil cannot be incorporated into DNA. The sequence is that of Deoxyuridine 5'-triphosphate nucleotidohydrolase from Anaeromyxobacter dehalogenans (strain 2CP-1 / ATCC BAA-258).